A 396-amino-acid polypeptide reads, in one-letter code: Calsequestrin-1 (396 aa).

The signal sequence occupies residues 1–34 (MSATDRMGPRAVPGLRLALLLLLVLGTPKSGVQG). Phosphotyrosine is present on Tyr-43. Ser-81 is modified (phosphoserine). A Phosphothreonine modification is found at Thr-124. At Ser-216 the chain carries Phosphoserine. N-linked (GlcNAc...) asparagine glycosylation is present at Asn-350.

It belongs to the calsequestrin family. Monomer; increases in response to a depletion of intracellular calcium. Homodimer. Homotetramer and homopolymer. Can form linear homooligomers. Ca(2+) ions promote oligomerization. Interacts (via C-terminal end and preferentially with the monomeric form) with STIM1; this interaction increases in response to a depletion of intracellular calcium, decreases both STIM1 aggregation and clustering, interaction of STIM1 with ORAI1 and store-operated Ca(2+) entry (SOCE) activity. Interacts with ASPH and TRDN. In terms of processing, N-glycosylated. Expressed in myoblasts (at protein level).

It is found in the endoplasmic reticulum. It localises to the sarcoplasmic reticulum. Its subcellular location is the sarcoplasmic reticulum lumen. The protein resides in the sarcoplasmic reticulum membrane. The protein localises to the mitochondrion matrix. Its function is as follows. Calsequestrin is a high-capacity, moderate affinity, calcium-binding protein and thus acts as an internal calcium store in muscle. Calcium ions are bound by clusters of acidic residues at the protein surface, often at the interface between subunits. Can bind around 80 Ca(2+) ions. Regulates the release of lumenal Ca(2+) via the calcium release channel RYR1; this plays an important role in triggering muscle contraction. Negatively regulates store-operated Ca(2+) entry (SOCE) activity. The protein is Calsequestrin-1 (CASQ1) of Homo sapiens (Human).